We begin with the raw amino-acid sequence, 20 residues long: 54 kDa cell wall protein (20 aa).

The disordered stretch occupies residues 1-20 (KVPVDDQFRRVNNGGATDTR).

The protein localises to the secreted. It localises to the cell wall. The protein is 54 kDa cell wall protein of Arabidopsis thaliana (Mouse-ear cress).